The chain runs to 341 residues: UDP-3-O-(3-hydroxymyristoyl)glucosamine N-acyltransferase (341 aa).

Histidine 239 functions as the Proton acceptor in the catalytic mechanism.

Belongs to the transferase hexapeptide repeat family. LpxD subfamily. As to quaternary structure, homotrimer.

The enzyme catalyses a UDP-3-O-[(3R)-3-hydroxyacyl]-alpha-D-glucosamine + a (3R)-hydroxyacyl-[ACP] = a UDP-2-N,3-O-bis[(3R)-3-hydroxyacyl]-alpha-D-glucosamine + holo-[ACP] + H(+). The catalysed reaction is UDP-3-O-[(3R)-3-hydroxytetradecanoyl]-alpha-D-glucosamine + (3R)-hydroxytetradecanoyl-[ACP] = UDP-2-N,3-O-bis[(3R)-3-hydroxytetradecanoyl]-alpha-D-glucosamine + holo-[ACP] + H(+). The protein operates within glycolipid biosynthesis; lipid IV(A) biosynthesis; lipid IV(A) from (3R)-3-hydroxytetradecanoyl-[acyl-carrier-protein] and UDP-N-acetyl-alpha-D-glucosamine: step 3/6. Its function is as follows. Catalyzes the N-acylation of UDP-3-O-(hydroxytetradecanoyl)glucosamine using 3-hydroxytetradecanoyl-ACP as the acyl donor. Is involved in the biosynthesis of lipid A, a phosphorylated glycolipid that anchors the lipopolysaccharide to the outer membrane of the cell. This chain is UDP-3-O-(3-hydroxymyristoyl)glucosamine N-acyltransferase, found in Escherichia coli (strain UTI89 / UPEC).